We begin with the raw amino-acid sequence, 368 residues long: Alcohol dehydrogenase 6 (368 aa).

S23 is modified (phosphoserine). Positions 47, 69, 99, 102, 105, 113, and 175 each coordinate Zn(2+). Residues 200 to 205 (GLGGVG), D224, K229, and 293 to 295 (VGV) contribute to the NAD(+) site.

It belongs to the zinc-containing alcohol dehydrogenase family. Class-V subfamily. As to quaternary structure, dimer. It depends on Zn(2+) as a cofactor. As to expression, stomach and liver.

The protein resides in the cytoplasm. It catalyses the reaction a primary alcohol + NAD(+) = an aldehyde + NADH + H(+). It carries out the reaction a secondary alcohol + NAD(+) = a ketone + NADH + H(+). Inhibited partially by pyrazole (10 mM) in the reaction mixture containing 100 mM ethanol at pH 10.0. Its function is as follows. Alcohol dehydrogenase. Catalyzes the NAD-dependent oxidation of primary alcohols to the corresponding aldehydes. Oxidizes secondary alcohols to the corresponding ketones. This Homo sapiens (Human) protein is Alcohol dehydrogenase 6 (ADH6).